The sequence spans 505 residues: Aspartyl/glutamyl-tRNA(Asn/Gln) amidotransferase subunit B (505 aa).

Residues 220-241 (NVSLRPRPAPGDPDAPFGTRSE) form a disordered region.

The protein belongs to the GatB/GatE family. GatB subfamily. In terms of assembly, heterotrimer of A, B and C subunits.

The catalysed reaction is L-glutamyl-tRNA(Gln) + L-glutamine + ATP + H2O = L-glutaminyl-tRNA(Gln) + L-glutamate + ADP + phosphate + H(+). It catalyses the reaction L-aspartyl-tRNA(Asn) + L-glutamine + ATP + H2O = L-asparaginyl-tRNA(Asn) + L-glutamate + ADP + phosphate + 2 H(+). Functionally, allows the formation of correctly charged Asn-tRNA(Asn) or Gln-tRNA(Gln) through the transamidation of misacylated Asp-tRNA(Asn) or Glu-tRNA(Gln) in organisms which lack either or both of asparaginyl-tRNA or glutaminyl-tRNA synthetases. The reaction takes place in the presence of glutamine and ATP through an activated phospho-Asp-tRNA(Asn) or phospho-Glu-tRNA(Gln). This chain is Aspartyl/glutamyl-tRNA(Asn/Gln) amidotransferase subunit B, found in Frankia casuarinae (strain DSM 45818 / CECT 9043 / HFP020203 / CcI3).